The primary structure comprises 480 residues: Vacuolar protein sorting-associated protein 9A (480 aa).

In terms of domain architecture, VPS9 spans 111–255; sequence VKSDEELFEK…IWNIDGESLS (145 aa). 2 residues coordinate GTP: asparagine 189 and aspartate 194. Residues 276–288 are compositionally biased toward polar residues; it reads SASSENQDNQNNL. Disordered stretches follow at residues 276 to 338 and 418 to 480; these read SASS…VQSI and ESEE…PEHA. Over residues 289–305 the composition is skewed to basic and acidic residues; the sequence is DVREQKSQTLKASRDSD. Polar residues-rich tracts occupy residues 327 to 338, 427 to 437, and 451 to 461; these read ASSNPVERVQSI, NAVNFSEGSSK, and VDNTGTQQTAV.

Interacts with RAB5A. Interacts with GPA3 (via C-terminus).

The protein localises to the cytoplasm. It localises to the golgi apparatus. It is found in the trans-Golgi network. Its subcellular location is the prevacuolar compartment. In terms of biological role, functions as a guanine nucleotide exchange factor (GEF) for Rab small GTPases. Activates specifically RAB5A protein. Functions cooperatively with RAB5A to regulate post-Golgi dense vesicle-mediated transport of storage proteins to the type II protein bodies (PBII) protein storage vacuoles in developing endosperm. The protein is Vacuolar protein sorting-associated protein 9A of Oryza sativa subsp. japonica (Rice).